The following is a 309-amino-acid chain: 2-dehydro-3-deoxygluconokinase (309 aa).

Residues 28–32, Y88, 102–104, and R170 contribute to the substrate site; these read GDTLN and YWR. ATP contacts are provided by residues 168-170, 228-233, and 261-264; these read NYR, KRGADS, and AAGD. D264 is a substrate binding site. The active-site Proton acceptor is the D264.

This sequence belongs to the carbohydrate kinase PfkB family.

The catalysed reaction is 2-dehydro-3-deoxy-D-gluconate + ATP = 2-dehydro-3-deoxy-6-phospho-D-gluconate + ADP + H(+). Its pathway is carbohydrate acid metabolism; 2-dehydro-3-deoxy-D-gluconate degradation; D-glyceraldehyde 3-phosphate and pyruvate from 2-dehydro-3-deoxy-D-gluconate: step 1/2. Catalyzes the phosphorylation of 2-keto-3-deoxygluconate (KDG) to produce 2-keto-3-deoxy-6-phosphogluconate (KDPG). The protein is 2-dehydro-3-deoxygluconokinase (kdgK) of Escherichia coli (strain K12).